The sequence spans 67 residues: Conotoxin TsMMSK-011 (67 aa).

A signal peptide spans 1-20; the sequence is MMSKLGVLLTICLLLFPLTA. The propeptide occupies 21-50; that stretch reads VQLDGDQPADLPALRTQDISTDHSPWFDPV. 3 cysteine pairs are disulfide-bonded: C53–C65, C54–C61, and C58–C64. At P63 the chain carries 4-hydroxyproline.

The protein belongs to the conotoxin M superfamily. Expressed by the venom duct.

Its subcellular location is the secreted. In Conus tessulatus (Tessellate cone), this protein is Conotoxin TsMMSK-011.